Consider the following 150-residue polypeptide: Arginine repressor (150 aa).

It belongs to the ArgR family.

It is found in the cytoplasm. The protein operates within amino-acid biosynthesis; L-arginine biosynthesis [regulation]. Its function is as follows. Regulates arginine biosynthesis genes. The chain is Arginine repressor from Staphylococcus haemolyticus (strain JCSC1435).